Consider the following 407-residue polypeptide: 1-deoxy-D-xylulose 5-phosphate reductoisomerase (407 aa).

NADPH-binding residues include T27, G28, S29, I30, A53, R54, N55, and N140. Residue K141 coordinates 1-deoxy-D-xylulose 5-phosphate. Residue E142 participates in NADPH binding. D166 lines the Mn(2+) pocket. 1-deoxy-D-xylulose 5-phosphate contacts are provided by S167, E168, S192, and H215. E168 contributes to the Mn(2+) binding site. G221 contributes to the NADPH binding site. Positions 228, 233, 234, and 237 each coordinate 1-deoxy-D-xylulose 5-phosphate. A Mn(2+)-binding site is contributed by E237.

Belongs to the DXR family. Requires Mg(2+) as cofactor. It depends on Mn(2+) as a cofactor.

It carries out the reaction 2-C-methyl-D-erythritol 4-phosphate + NADP(+) = 1-deoxy-D-xylulose 5-phosphate + NADPH + H(+). It participates in isoprenoid biosynthesis; isopentenyl diphosphate biosynthesis via DXP pathway; isopentenyl diphosphate from 1-deoxy-D-xylulose 5-phosphate: step 1/6. Its function is as follows. Catalyzes the NADPH-dependent rearrangement and reduction of 1-deoxy-D-xylulose-5-phosphate (DXP) to 2-C-methyl-D-erythritol 4-phosphate (MEP). This is 1-deoxy-D-xylulose 5-phosphate reductoisomerase from Oleidesulfovibrio alaskensis (strain ATCC BAA-1058 / DSM 17464 / G20) (Desulfovibrio alaskensis).